We begin with the raw amino-acid sequence, 358 residues long: UDP-3-O-acylglucosamine N-acyltransferase (358 aa).

Residue H248 is the Proton acceptor of the active site.

The protein belongs to the transferase hexapeptide repeat family. LpxD subfamily. As to quaternary structure, homotrimer.

It carries out the reaction a UDP-3-O-[(3R)-3-hydroxyacyl]-alpha-D-glucosamine + a (3R)-hydroxyacyl-[ACP] = a UDP-2-N,3-O-bis[(3R)-3-hydroxyacyl]-alpha-D-glucosamine + holo-[ACP] + H(+). Its pathway is bacterial outer membrane biogenesis; LPS lipid A biosynthesis. Catalyzes the N-acylation of UDP-3-O-acylglucosamine using 3-hydroxyacyl-ACP as the acyl donor. Is involved in the biosynthesis of lipid A, a phosphorylated glycolipid that anchors the lipopolysaccharide to the outer membrane of the cell. In Synechococcus sp. (strain WH7803), this protein is UDP-3-O-acylglucosamine N-acyltransferase.